Here is a 148-residue protein sequence, read N- to C-terminus: MSTTPVQPLQSEPLMDSETGVAPQIEAPQVPEGPKKGIDEQIFDYFAEHPVQATAATLVGLYALGAVFKRPAAGARGQFFKGGFENKMGPSEALQILSLRDAGLTMNKLKGQHRKIMLLNHPDRGGSPYVATKINEAKSVLEKRGGLK.

A compositionally biased stretch (polar residues) spans 1–10 (MSTTPVQPLQ). The interval 1–22 (MSTTPVQPLQSEPLMDSETGVA) is disordered. The Mitochondrial intermembrane portion of the chain corresponds to 1 to 50 (MSTTPVQPLQSEPLMDSETGVAPQIEAPQVPEGPKKGIDEQIFDYFAEHP). A helical membrane pass occupies residues 51 to 68 (VQATAATLVGLYALGAVF). Residues 69–148 (KRPAAGARGQ…SVLEKRGGLK (80 aa)) lie on the Mitochondrial matrix side of the membrane. The region spanning 92–148 (EALQILSLRDAGLTMNKLKGQHRKIMLLNHPDRGGSPYVATKINEAKSVLEKRGGLK) is the J domain.

Belongs to the TIM14 family. Heterodimer with PAM16. Component of the PAM complex, at least composed of mtHsp70, MGE1, TIM44, PAM16, PAM17 and PAM18.

Its subcellular location is the mitochondrion inner membrane. Essential component of the PAM complex, a complex required for the translocation of transit peptide-containing proteins from the inner membrane into the mitochondrial matrix in an ATP-dependent manner. In the complex, it is required to stimulate activity of mtHSP70 (SSC1). The sequence is that of Mitochondrial import inner membrane translocase subunit TIM14 (PAM18) from Yarrowia lipolytica (strain CLIB 122 / E 150) (Yeast).